Consider the following 170-residue polypeptide: Metalloproteinase inhibitor 4 (170 aa).

In terms of domain architecture, NTR spans 1–105 (ISSEKVVPAS…SLNHHYHLNC (105 aa)). 2 involved in metalloproteinase-binding regions span residues 6–9 (VVPA) and 48–49 (SS). Cystine bridges form between Cys-107/Cys-154, Cys-112/Cys-117, and Cys-125/Cys-146.

It belongs to the protease inhibitor I35 (TIMP) family.

The protein localises to the secreted. Functionally, complexes with metalloproteinases (such as collagenases) and irreversibly inactivates them by binding to their catalytic zinc cofactor. This is Metalloproteinase inhibitor 4 (TIMP4) from Oryctolagus cuniculus (Rabbit).